We begin with the raw amino-acid sequence, 320 residues long: o-succinylbenzoate synthase (320 aa).

Catalysis depends on Lys-133, which acts as the Proton donor. Positions 161, 190, and 213 each coordinate Mg(2+). Catalysis depends on Lys-235, which acts as the Proton acceptor.

The protein belongs to the mandelate racemase/muconate lactonizing enzyme family. MenC type 1 subfamily. The cofactor is a divalent metal cation.

It catalyses the reaction (1R,6R)-6-hydroxy-2-succinyl-cyclohexa-2,4-diene-1-carboxylate = 2-succinylbenzoate + H2O. The protein operates within quinol/quinone metabolism; 1,4-dihydroxy-2-naphthoate biosynthesis; 1,4-dihydroxy-2-naphthoate from chorismate: step 4/7. It functions in the pathway quinol/quinone metabolism; menaquinone biosynthesis. Its function is as follows. Converts 2-succinyl-6-hydroxy-2,4-cyclohexadiene-1-carboxylate (SHCHC) to 2-succinylbenzoate (OSB). The polypeptide is o-succinylbenzoate synthase (Escherichia coli O17:K52:H18 (strain UMN026 / ExPEC)).